The chain runs to 245 residues: Ubiquinone/menaquinone biosynthesis C-methyltransferase UbiE (245 aa).

Residues Thr-71, Asp-92, and 118-119 (DA) each bind S-adenosyl-L-methionine.

It belongs to the class I-like SAM-binding methyltransferase superfamily. MenG/UbiE family.

It carries out the reaction a 2-demethylmenaquinol + S-adenosyl-L-methionine = a menaquinol + S-adenosyl-L-homocysteine + H(+). The enzyme catalyses a 2-methoxy-6-(all-trans-polyprenyl)benzene-1,4-diol + S-adenosyl-L-methionine = a 5-methoxy-2-methyl-3-(all-trans-polyprenyl)benzene-1,4-diol + S-adenosyl-L-homocysteine + H(+). It functions in the pathway quinol/quinone metabolism; menaquinone biosynthesis; menaquinol from 1,4-dihydroxy-2-naphthoate: step 2/2. The protein operates within cofactor biosynthesis; ubiquinone biosynthesis. Functionally, methyltransferase required for the conversion of demethylmenaquinol (DMKH2) to menaquinol (MKH2) and the conversion of 2-polyprenyl-6-methoxy-1,4-benzoquinol (DDMQH2) to 2-polyprenyl-3-methyl-6-methoxy-1,4-benzoquinol (DMQH2). This Neisseria meningitidis serogroup B (strain ATCC BAA-335 / MC58) protein is Ubiquinone/menaquinone biosynthesis C-methyltransferase UbiE.